The primary structure comprises 561 residues: Dihydroxy-acid dehydratase (561 aa).

Residue C50 participates in [2Fe-2S] cluster binding. Residue D82 participates in Mg(2+) binding. C123 lines the [2Fe-2S] cluster pocket. Positions 124 and 125 each coordinate Mg(2+). K125 carries the post-translational modification N6-carboxylysine. C195 contributes to the [2Fe-2S] cluster binding site. E447 serves as a coordination point for Mg(2+). S473 functions as the Proton acceptor in the catalytic mechanism.

It belongs to the IlvD/Edd family. Homodimer. [2Fe-2S] cluster is required as a cofactor. The cofactor is Mg(2+).

It catalyses the reaction (2R)-2,3-dihydroxy-3-methylbutanoate = 3-methyl-2-oxobutanoate + H2O. It carries out the reaction (2R,3R)-2,3-dihydroxy-3-methylpentanoate = (S)-3-methyl-2-oxopentanoate + H2O. It participates in amino-acid biosynthesis; L-isoleucine biosynthesis; L-isoleucine from 2-oxobutanoate: step 3/4. It functions in the pathway amino-acid biosynthesis; L-valine biosynthesis; L-valine from pyruvate: step 3/4. Functions in the biosynthesis of branched-chain amino acids. Catalyzes the dehydration of (2R,3R)-2,3-dihydroxy-3-methylpentanoate (2,3-dihydroxy-3-methylvalerate) into 2-oxo-3-methylpentanoate (2-oxo-3-methylvalerate) and of (2R)-2,3-dihydroxy-3-methylbutanoate (2,3-dihydroxyisovalerate) into 2-oxo-3-methylbutanoate (2-oxoisovalerate), the penultimate precursor to L-isoleucine and L-valine, respectively. This Acaryochloris marina (strain MBIC 11017) protein is Dihydroxy-acid dehydratase.